We begin with the raw amino-acid sequence, 298 residues long: MKIAILSREPRNYSTRRLVEVAQARGHQVEVLDTLRCYMNIASHSPSIHYEGRELESYDAVIPRIGASITFYGTAVLRQFEMMNTMALNSSVAISRSRDKLRAMQLLSRHGIGLPITGYAHSTHDVPDLITMVGGAPLVVKLLEGTQGIGVVLCETHKAAESVIEAFIQTNNNILVQEYIREANGADIRCLVVNGKVVAAMRRQAQPGEFRSNLHRGGTAEAIKISPEERATAVQAAKIMGLDVAGVDILRSARGPLVLEVNSSPGLQGVEAASGKDVAGKIIEFLELKASRKNKPAE.

The region spanning methionine 104–glutamate 287 is the ATP-grasp domain. ATP-binding positions include lysine 141, glutamate 178–tyrosine 179, aspartate 187, and arginine 211–asparagine 213. Residues aspartate 248, glutamate 260, and asparagine 262 each contribute to the Mg(2+) site. Aspartate 248, glutamate 260, and asparagine 262 together coordinate Mn(2+).

Belongs to the RimK family. Mg(2+) is required as a cofactor. The cofactor is Mn(2+).

The sequence is that of Probable alpha-L-glutamate ligase from Aeromonas salmonicida (strain A449).